The sequence spans 89 residues: Small ribosomal subunit protein uS15 (89 aa).

It belongs to the universal ribosomal protein uS15 family. Part of the 30S ribosomal subunit. Forms a bridge to the 50S subunit in the 70S ribosome, contacting the 23S rRNA.

One of the primary rRNA binding proteins, it binds directly to 16S rRNA where it helps nucleate assembly of the platform of the 30S subunit by binding and bridging several RNA helices of the 16S rRNA. In terms of biological role, forms an intersubunit bridge (bridge B4) with the 23S rRNA of the 50S subunit in the ribosome. The protein is Small ribosomal subunit protein uS15 of Chlorobium chlorochromatii (strain CaD3).